The chain runs to 577 residues: Moesin (577 aa).

Residues 2–295 (PKTISVRVTT…GNHELYMRRR (294 aa)) enclose the FERM domain. Ser-74 carries the post-translational modification Phosphoserine. Lys-79 is subject to N6-acetyllysine. The residue at position 83 (Lys-83) is an N6-succinyllysine. The [IL]-x-C-x-x-[DE] motif signature appears at 115–120 (IYCPPE). Phosphotyrosine is present on Tyr-116. Cys-117 carries the S-nitrosocysteine modification. An N6-acetyllysine mark is found at Lys-139 and Lys-165. 3 disordered regions span residues 323-342 (LENEKKKREMAEKEKEKIER), 375-409 (LEQERKRAQSEAEKLAKERQEAEEAKEALLQASRD), and 466-518 (AMST…NERV). Basic and acidic residues predominate over residues 375–401 (LEQERKRAQSEAEKLAKERQEAEEAKE). Residue Ser-407 is modified to Phosphoserine. Positions 476–487 (AENEQDEQDENG) are enriched in acidic residues. Positions 492–518 (ADLRADAMAKDRSEEERTTEAEKNERV) are enriched in basic and acidic residues. Residue Ser-527 is modified to Phosphoserine. Thr-558 carries the post-translational modification Phosphothreonine; by ROCK2 and STK10.

As to quaternary structure, in resting T-cells, part of a PAG1-NHERF1-MSN complex which is disrupted upon TCR activation. Interacts with NHERF1. Interacts with PPP1R16B. Interacts with SELPLG and SYK; these interactions mediate the activation of SYK by SELPLG. Interacts with PDPN (via cytoplasmic domain); this interaction activates RHOA and promotes epithelial-mesenchymal transition. Interacts with SPN/CD43 cytoplasmic tail. Interacts with CD44. Interacts with ICAM2. Interacts with ICAM3 (via C-terminus). Interacts with PDZD8. Interacts with F-actin. Interacts with CD46. Interacts with PTPN6. (Microbial infection) Interacts with HIV-1 envelope protein gp120. In terms of processing, phosphorylation on Thr-558 is crucial for the formation of microvilli-like structures. Phosphorylation by ROCK2 suppresses the head-to-tail association of the N-terminal and C-terminal halves resulting in an opened conformation which is capable of actin and membrane-binding. Phosphorylation on Thr-558 by STK10 negatively regulates lymphocyte migration and polarization. S-nitrosylation of Cys-117 is induced by interferon-gamma and oxidatively-modified low-densitity lipoprotein (LDL(ox)) implicating the iNOS-S100A8/9 transnitrosylase complex. In terms of tissue distribution, in all tissues and cultured cells studied.

Its subcellular location is the cell membrane. It is found in the cytoplasm. The protein resides in the cytoskeleton. The protein localises to the apical cell membrane. It localises to the cell projection. Its subcellular location is the microvillus membrane. It is found in the microvillus. A head-to-tail association, of the N-terminal and C-terminal halves results in a closed conformation (inactive form) which is incapable of actin or membrane-binding. Ezrin-radixin-moesin (ERM) family protein that connects the actin cytoskeleton to the plasma membrane and thereby regulates the structure and function of specific domains of the cell cortex. Tethers actin filaments by oscillating between a resting and an activated state providing transient interactions between moesin and the actin cytoskeleton. Once phosphorylated on its C-terminal threonine, moesin is activated leading to interaction with F-actin and cytoskeletal rearrangement. These rearrangements regulate many cellular processes, including cell shape determination, membrane transport, and signal transduction. The role of moesin is particularly important in immunity acting on both T and B-cells homeostasis and self-tolerance, regulating lymphocyte egress from lymphoid organs. Modulates phagolysosomal biogenesis in macrophages. Also participates in immunologic synapse formation. In Homo sapiens (Human), this protein is Moesin.